Reading from the N-terminus, the 204-residue chain is uncharacterized protein (204 aa).

The N-terminal stretch at 1 to 17 (MKRLVTGLLALSLFLAA) is a signal peptide. Residues 17–102 (ACGQDSDQQK…NQSSNNQKSS (86 aa)) are disordered. Cys-18 carries the N-palmitoyl cysteine lipid modification. The S-diacylglycerol cysteine moiety is linked to residue Cys-18. Basic and acidic residues predominate over residues 23 to 70 (DQQKDSNKEKDDKAKTEQQDKKTNDSSKDKKDNKDDSKDVNKDNKDNS). The segment covering 71 to 102 (ANDNQQQSNSNATNNDQNQTNNNQSSNNQKSS) has biased composition (low complexity).

It localises to the cell membrane. This is an uncharacterized protein from Staphylococcus aureus (strain Mu50 / ATCC 700699).